We begin with the raw amino-acid sequence, 425 residues long: Pectate lyase L (425 aa).

The first 25 residues, 1–25 (MKYLNCFISTGLAAFFLVNSTSVLA), serve as a signal peptide directing secretion. Cys-28 and Cys-114 are disulfide-bonded. Asp-209, Asp-233, Asp-234, and Asp-237 together coordinate Ca(2+). Lys-273 serves as the catalytic Proton acceptor. Residues Asn-402, Ser-413, Ala-416, Asp-418, and Glu-423 each coordinate Ca(2+).

The protein belongs to the polysaccharide lyase 9 family. Ca(2+) serves as cofactor.

It is found in the secreted. The catalysed reaction is Eliminative cleavage of (1-&gt;4)-alpha-D-galacturonan to give oligosaccharides with 4-deoxy-alpha-D-galact-4-enuronosyl groups at their non-reducing ends.. It functions in the pathway glycan metabolism; pectin degradation; 2-dehydro-3-deoxy-D-gluconate from pectin: step 2/5. Its function is as follows. Presents an endo-cleaving activity on polygalacturonate or partially methylated pectin. The chain is Pectate lyase L (pelL) from Dickeya chrysanthemi (Pectobacterium chrysanthemi).